A 156-amino-acid polypeptide reads, in one-letter code: Envelope glycoprotein L (156 aa).

The N-terminal stretch at 1–16 (MSPLVAVLVFFSAALG) is a signal peptide. A gL alphaherpesvirus-type domain is found at 50–156 (ELEWDDEDHP…LRYNGGPPAE (107 aa)). A disulfide bond links Cys-71 and Cys-95.

The protein belongs to the herpesviridae glycoprotein L (gL) family. Alphaherpesvirinae gL subfamily. Interacts with glycoprotein H (gH); this interaction is necessary for the correct processing and cell surface expression of gH. The heterodimer gH/gL seems to interact with gB trimers during fusion. O-glycosylated, and sialylated.

The protein localises to the virion membrane. It is found in the host cell membrane. It localises to the host Golgi apparatus. The protein resides in the host trans-Golgi network. The heterodimer glycoprotein H-glycoprotein L is required for the fusion of viral and plasma membranes leading to virus entry into the host cell. Acts as a functional inhibitor of gH and maintains gH in an inhibited form. Upon binding to host integrins, gL dissociates from gH leading to activation of the viral fusion glycoproteins gB and gH. This is Envelope glycoprotein L from Suid herpesvirus 1 (strain Indiana-Funkhauser / Becker) (SuHV-1).